A 522-amino-acid chain; its full sequence is Maturase K (522 aa).

It belongs to the intron maturase 2 family. MatK subfamily.

It localises to the plastid. Its subcellular location is the chloroplast. Its function is as follows. Usually encoded in the trnK tRNA gene intron. Probably assists in splicing its own and other chloroplast group II introns. The protein is Maturase K of Micranthus junceus (Micranthus plantagineus var. junceus).